The primary structure comprises 189 residues: CASP-like protein 1U2 (189 aa).

Over 1–24 (MFGSDDSGCHVMDDDVAPPANGSK) the chain is Cytoplasmic. Residues 25 to 45 (AVTLLLRLITLALALTSAVLM) form a helical membrane-spanning segment. Residues 46–71 (ATASECTIYGLDGATATTVTFKDYQP) are Extracellular-facing. A helical membrane pass occupies residues 72–92 (FIYLVGSNIAATILEVAAIYV). At 93-109 (QVGKGDDVEDAPMIPRV) the chain is on the cytoplasmic side. Residues 110–130 (VLVVVDVAVQMLLYSATGAVF) traverse the membrane as a helical segment. Residues 131 to 158 (AAVMAYGPQISACTGAAGHFCEQVQRSK) are Extracellular-facing. Residues 159 to 179 (IISLAASLSAVLAAVAKDVAL) traverse the membrane as a helical segment. Residues 180 to 189 (PCSVWPHPSS) are Cytoplasmic-facing.

The protein belongs to the Casparian strip membrane proteins (CASP) family. In terms of assembly, homodimer and heterodimers.

The protein resides in the cell membrane. The chain is CASP-like protein 1U2 from Sorghum bicolor (Sorghum).